The following is a 238-amino-acid chain: Ribonuclease-like storage protein (238 aa).

An N-terminal signal peptide occupies residues 1-23; it reads MRAIYIISVIIVSLSIFSWGGNA. Gln-37 contacts RNA. Residues Cys-43 and Cys-49 are joined by a disulfide bond. Residues His-61, Phe-109, 112-113, and 116-117 contribute to the RNA site; these read HE and KH. His-61 functions as the Proton donor in the catalytic mechanism. Cystine bridges form between Cys-76–Cys-120 and Cys-196–Cys-207. Residue Glu-113 is part of the active site. His-117 serves as the catalytic Proton acceptor.

This sequence belongs to the RNase T2 family. Homodimer. In terms of tissue distribution, root.

Functionally, may act as a storage protein providing a nitrogen source. Seems to have no RNase activity although it has conserved the active site residues. The protein is Ribonuclease-like storage protein of Panax ginseng (Korean ginseng).